We begin with the raw amino-acid sequence, 1499 residues long: Condensin complex subunit 1 (1499 aa).

Disordered stretches follow at residues 1–43 (MPRK…DGLS) and 1421–1499 (ITKN…MLDD). Positions 1432-1446 (PTTMSGSSRTTSRAA) are enriched in low complexity. Acidic residues-rich tracts occupy residues 1458–1467 (SDEDDSDSDD) and 1486–1499 (ADDD…MLDD).

The protein belongs to the CND1 (condensin subunit 1) family. In terms of assembly, component of the condensin I complex, which contains the mix-1/SMC2 and smc-4/SMC4 heterodimer, and three non SMC subunits that probably regulate the complex: dpy-26, capg-1 and dpy-28. Within the complex, interacts with dpy-26 and smc-4. Component of the dosage compensation complex, which consist of the condensin I like components mix-1/SMC2 and dpy-27/SMC4, and the three non SMC subunits dpy-26, capg-1 and dpy-28. Within the complex, interacts with mix-1, dpy-27, dpy-26 and capg-1. Interacts with smcl-1. Sumoylated. Sumoylated in the context of the dosage compensation complex but not in the condensin I complex. Sumoylation is important for assembly of the dosage compensation complex and its robust binding to the X chromosome. In terms of tissue distribution, expressed in somatic and germline tissues (at protein level).

The protein localises to the nucleus. It localises to the chromosome. Required for both chromosome condensation and segregation during mitosis and meiosis and X-chromosome dosage compensation depending on its binding partners. Regulatory subunit of the condensin I complex, a complex required for conversion of interphase chromatin into mitotic-like condense chromosomes. The condensin I complex probably introduces positive supercoils into relaxed DNA in the presence of type I topoisomerases and converts nicked DNA into positive knotted forms in the presence of type II topoisomerases. The condensin I complex function is required for proper chromosome segregation in mitosis and meiosis. As a member of the condensin I complex, further controls the crossover number and distribution in meiosis by restricting double strand break formation, possibly by influencing higher-order chromosome structure. Plays a role in robust cytokinesis upon presence of chromatin obstructions. Also a member of the condensin I-like dosage compensation complex that associates specifically with hermaphrodite X chromosomes to reduce their gene transcription during interphase, possibly through chromatin reorganization. This Caenorhabditis elegans protein is Condensin complex subunit 1.